We begin with the raw amino-acid sequence, 524 residues long: Methyl-CpG-binding domain-containing protein 8 (524 aa).

The span at 45-60 (CSSLSPSSSASLAASA) shows a compositional bias: low complexity. A disordered region spans residues 45–151 (CSSLSPSSSA…EEELEDNEGQ (107 aa)). Over residues 75–84 (FNESAGSRKQ) the composition is skewed to polar residues. Over residues 106–116 (RQRDDSSREEQ) the composition is skewed to basic and acidic residues. Residues 136–149 (EEEDEGEEELEDNE) are compositionally biased toward acidic residues. Residues 334-406 (VVNACDYGGY…QHYYLQSDNK (73 aa)) enclose the MBD domain.

Expressed in shoot meristems, roots (vasculature and tips), hypocotyls (vasculature), cotyledons (vasculature and hydathodes), young leaves, buds, flowers and stems. Detected in stomata.

It is found in the nucleus. Probable transcriptional regulator. May regulates developmental traits such as flowering time. This chain is Methyl-CpG-binding domain-containing protein 8 (MBD8), found in Arabidopsis thaliana (Mouse-ear cress).